Reading from the N-terminus, the 334-residue chain is Proline-serine-threonine phosphatase-interacting protein 2 (334 aa).

The region spanning 4–264 is the F-BAR domain; it reads SLFKGNFWSA…SLEMCSIQRD (261 aa). The stretch at 66-166 forms a coiled coil; the sequence is GQSEINTLKR…AVSRSANLVN (101 aa). Residues 295–322 form a disordered region; sequence VPAGKATGPNLARRGPLPIPKSSPDDPN. Phosphotyrosine occurs at positions 323 and 329.

Post-translationally, phosphorylated on tyrosine.

The protein localises to the cytoplasm. The protein resides in the membrane. Binds to F-actin. May be involved in regulation of the actin cytoskeleton. The chain is Proline-serine-threonine phosphatase-interacting protein 2 (PSTPIP2) from Homo sapiens (Human).